Here is a 185-residue protein sequence, read N- to C-terminus: Elongation factor P (185 aa).

Belongs to the elongation factor P family.

It is found in the cytoplasm. Its pathway is protein biosynthesis; polypeptide chain elongation. Involved in peptide bond synthesis. Stimulates efficient translation and peptide-bond synthesis on native or reconstituted 70S ribosomes in vitro. Probably functions indirectly by altering the affinity of the ribosome for aminoacyl-tRNA, thus increasing their reactivity as acceptors for peptidyl transferase. The sequence is that of Elongation factor P from Burkholderia mallei (strain NCTC 10247).